The chain runs to 428 residues: MEALKVEKFTTANRGNGLRAVAPLRPGELLFRSDPLAYTVCKGSRGVVCDRCLLGKEKLMRCSQCRIAKYCSAKCQKKAWPDHRRECSCLKSCKPRYPPDSVRLLGRVIVKLMDEKPSESEKLYSFYDLESNISKLTEDKKEGLRQLAMTFQHFMREEIQDASQLPPSFDLFEAFAKVICNSFTICNAEMQEVGVGLYPSMSLLNHSCDPNCSIVFNGPHLLLRAVREIEAGEELTICYLDMLMTSEERRKQLRDQYCFECDCIRCQTQDKDADMLTGDEQIWKEVQESLKKIEELKAHWKWEQVLALCQAIINSNSNRLPDINIYQLKVLDCAMDACINLGMLEEALFYAMRTMEPYRIFFPGSHPVRGVQVMKVGKLQLHQGMFPQAMKNLRLAFDIMKVTHGREHSLIEDLILLLEECDANIRAS.

M1 carries the post-translational modification N-acetylmethionine. An SET domain is found at 4–240 (LKVEKFTTAN…AGEELTICYL (237 aa)). Residue 14–16 (RGN) participates in S-adenosyl-L-methionine binding. The Zn(2+) site is built by C49, C52, C62, C65, C71, C75, H83, and C87. The MYND-type zinc-finger motif lies at 49–87 (CDRCLLGKEKLMRCSQCRIAKYCSAKCQKKAWPDHRREC). Residues Y124, N132, 205–206 (NH), Y239, and F259 each bind S-adenosyl-L-methionine. Residues 272 to 428 (DADMLTGDEQ…EECDANIRAS (157 aa)) are C-terminal domain; essential for histone methyltransferase activity, nuclear localization and mediates interaction with HSP90AA1.

Belongs to the class V-like SAM-binding methyltransferase superfamily. Histone-lysine methyltransferase family. Interacts with HSPCA. Interacts with HELZ. Interacts with POLR2A; the interaction may be indirect and may be mediated by HELZ. Interacts with HSP90AA1; this interaction enhances SMYD3 histone-lysine N-methyltransferase.

The protein localises to the cytoplasm. It localises to the nucleus. The enzyme catalyses L-lysyl(4)-[histone H3] + 3 S-adenosyl-L-methionine = N(6),N(6),N(6)-trimethyl-L-lysyl(4)-[histone H3] + 3 S-adenosyl-L-homocysteine + 3 H(+). With respect to regulation, histone methyltransferase activity strongly stimulated by HSPCA. In terms of biological role, histone methyltransferase. Specifically methylates 'Lys-4' of histone H3, inducing di- and tri-methylation, but not monomethylation. Also methylates 'Lys-5' of histone H4. Plays an important role in transcriptional activation as a member of an RNA polymerase complex. Binds DNA containing 5'-CCCTCC-3' or 5'-GAGGGG-3' sequences. The polypeptide is Histone-lysine N-methyltransferase SMYD3 (Smyd3) (Mus musculus (Mouse)).